The primary structure comprises 291 residues: Nitrogenase iron protein 1 (291 aa).

An ATP-binding site is contributed by 10–17; sequence GKGGIGKS. Residue C98 coordinates [4Fe-4S] cluster. ADP-ribosylarginine; by dinitrogenase reductase ADP-ribosyltransferase is present on R101. C133 contacts [4Fe-4S] cluster.

It belongs to the NifH/BchL/ChlL family. As to quaternary structure, homodimer. [4Fe-4S] cluster serves as cofactor. In terms of processing, the reversible ADP-ribosylation of Arg-101 inactivates the nitrogenase reductase and regulates nitrogenase activity.

The catalysed reaction is N2 + 8 reduced [2Fe-2S]-[ferredoxin] + 16 ATP + 16 H2O = H2 + 8 oxidized [2Fe-2S]-[ferredoxin] + 2 NH4(+) + 16 ADP + 16 phosphate + 6 H(+). Functionally, the key enzymatic reactions in nitrogen fixation are catalyzed by the nitrogenase complex, which has 2 components: the iron protein (component 2) and a component 1 which is either a molybdenum-iron protein, a vanadium-iron, or an iron-iron protein. In Azotobacter chroococcum mcd 1, this protein is Nitrogenase iron protein 1 (nifH1).